Here is a 242-residue protein sequence, read N- to C-terminus: Methylthioribulose-1-phosphate dehydratase (242 aa).

The segment at 1-23 (MTDQREEPQGSNDHLVRSSDPEH) is disordered. Residue Cys-102 coordinates substrate. Zn(2+) contacts are provided by His-119 and His-121. Glu-148 functions as the Proton donor/acceptor in the catalytic mechanism. Residue His-204 coordinates Zn(2+).

This sequence belongs to the aldolase class II family. MtnB subfamily. Zn(2+) is required as a cofactor.

It is found in the cytoplasm. It carries out the reaction 5-(methylsulfanyl)-D-ribulose 1-phosphate = 5-methylsulfanyl-2,3-dioxopentyl phosphate + H2O. The protein operates within amino-acid biosynthesis; L-methionine biosynthesis via salvage pathway; L-methionine from S-methyl-5-thio-alpha-D-ribose 1-phosphate: step 2/6. Catalyzes the dehydration of methylthioribulose-1-phosphate (MTRu-1-P) into 2,3-diketo-5-methylthiopentyl-1-phosphate (DK-MTP-1-P). The sequence is that of Methylthioribulose-1-phosphate dehydratase from Uncinocarpus reesii (strain UAMH 1704).